A 194-amino-acid polypeptide reads, in one-letter code: METNYLKRCFGNRLAQALAEVAMVQPSDPIEYLAHWLYHYRKTAKAKEKDRQEKIQLQREYENSLKETRMAEMLKQEERAIQEQCEKCHYQLGRRNSAVGTHPHPVPLISVASSLEKTKFMQENTEAFEKEPLKQESLPGTSDMIPGMPQQSPSSEPSVSSQVDLNTGTPQEINYQAIQHEIALEIHPGSESPP.

The tract at residues 126–172 (EAFEKEPLKQESLPGTSDMIPGMPQQSPSSEPSVSSQVDLNTGTPQE) is disordered. Residues 149 to 163 (PQQSPSSEPSVSSQV) are compositionally biased toward low complexity.

This sequence belongs to the dpy-30 family.

In Bos taurus (Bovine), this protein is DPY30 domain-containing protein 2 (DYDC2).